Consider the following 136-residue polypeptide: HetP-like commitment protein Alr2902 (136 aa).

A compositionally biased stretch (polar residues) spans 94 to 109 (KASTQDLNQSNNSDYL). The segment at 94-120 (KASTQDLNQSNNSDYLTTPEPDKRGNI) is disordered.

It belongs to the HetP family. In terms of assembly, in bacterial two-hybrid assays interacts robustly with HetR and Alr3234 and weakly with itself, HetP and Asl1930.

Delays heterocyst differentiation and commitment when nitrogen is limiting. Interplay between the 4 HetP paralogs controls the timing of commitment to heterocyst formation and its duration. Epistatic analysis show that the 3 paralogs act upstream of hetP to delay commitment (asl1930, alr3234) or inhibit development (alr2902). Asl1930 and Alr3234 must also attenuate the activity of Alr2902. When only this homolog is present no heterocysts are formed, showing it inhibits development. Ectopic expression partially complements a hetP deletion. The polypeptide is HetP-like commitment protein Alr2902 (Nostoc sp. (strain PCC 7120 / SAG 25.82 / UTEX 2576)).